Consider the following 293-residue polypeptide: MSLFDWFADRRKGQFVGKVSQETEESDGLWVKCPECGQVVYRKDLHANASVCSNCGYHHRIDSDERIVLIADQGSFKSLDRNLSPTDPLGFKDRRAYADRLRESQASTGMKDGVVTGLCQVEGMPMAMAVMDFRFMGGSMGSVVGEKITRLVERATAQGLPLLIVCASGGARMQEGMLSLMQMAKISGALERHREAELLYMPLLTHPTTGGVTASFAMLGDLILAEPKALIGFAGRRVIEQTLREKLPDNFQTAEYLQEHGFVDTIVPRTQLRKTLASLLLLHGCKAKKAAGK.

One can recognise a CoA carboxyltransferase N-terminal domain in the interval 29–293; that stretch reads LWVKCPECGQ…GCKAKKAAGK (265 aa). Residues Cys-33, Cys-36, Cys-52, and Cys-55 each contribute to the Zn(2+) site. The C4-type zinc-finger motif lies at 33-55; the sequence is CPECGQVVYRKDLHANASVCSNC.

Belongs to the AccD/PCCB family. Acetyl-CoA carboxylase is a heterohexamer composed of biotin carboxyl carrier protein (AccB), biotin carboxylase (AccC) and two subunits each of ACCase subunit alpha (AccA) and ACCase subunit beta (AccD). Requires Zn(2+) as cofactor.

The protein localises to the cytoplasm. The enzyme catalyses N(6)-carboxybiotinyl-L-lysyl-[protein] + acetyl-CoA = N(6)-biotinyl-L-lysyl-[protein] + malonyl-CoA. It participates in lipid metabolism; malonyl-CoA biosynthesis; malonyl-CoA from acetyl-CoA: step 1/1. Component of the acetyl coenzyme A carboxylase (ACC) complex. Biotin carboxylase (BC) catalyzes the carboxylation of biotin on its carrier protein (BCCP) and then the CO(2) group is transferred by the transcarboxylase to acetyl-CoA to form malonyl-CoA. In Prochlorococcus marinus (strain MIT 9303), this protein is Acetyl-coenzyme A carboxylase carboxyl transferase subunit beta.